Reading from the N-terminus, the 134-residue chain is Interferon-induced transmembrane protein 5 (134 aa).

Basic and acidic residues predominate over residues 1–20 (MDTSYPREDPRAPSSRKADA). The segment at 1–31 (MDTSYPREDPRAPSSRKADAAAHTALSMGTP) is disordered. Residues 1–39 (MDTSYPREDPRAPSSRKADAAAHTALSMGTPGPTPRDHM) are Extracellular-facing. A helical transmembrane segment spans residues 40 to 60 (LWSVFSTMYLNLCCLGFLALV). Residues Cys52, Cys53, and Cys86 are each lipidated (S-palmitoyl cysteine). Residues 61-88 (HSVKARDQKMAGNLEAARQYGSKAKCYN) lie on the Cytoplasmic side of the membrane. Residues 89–109 (ILAAMWTLVPPLLLLGLVVTG) traverse the membrane as a helical segment. Topologically, residues 110–134 (ALHLSKLAKDSAAFFSTKFDEEDYN) are extracellular.

It belongs to the CD225/Dispanin family. Interacts with FKBP11. Palmitoylated. Detected in embryonic bone (at protein level). Highly expressed in osteoblasts of adults and embryos. Expressed in primitive hemopoietic cells.

The protein resides in the cell membrane. In terms of biological role, required for normal bone mineralization. This Mus musculus (Mouse) protein is Interferon-induced transmembrane protein 5 (Ifitm5).